A 189-amino-acid polypeptide reads, in one-letter code: Peptidyl-tRNA hydrolase (189 aa).

A tRNA-binding site is contributed by Tyr15. His20 functions as the Proton acceptor in the catalytic mechanism. Phe66, Asn68, and Asn114 together coordinate tRNA.

Belongs to the PTH family. Monomer.

The protein resides in the cytoplasm. The enzyme catalyses an N-acyl-L-alpha-aminoacyl-tRNA + H2O = an N-acyl-L-amino acid + a tRNA + H(+). Functionally, hydrolyzes ribosome-free peptidyl-tRNAs (with 1 or more amino acids incorporated), which drop off the ribosome during protein synthesis, or as a result of ribosome stalling. Its function is as follows. Catalyzes the release of premature peptidyl moieties from peptidyl-tRNA molecules trapped in stalled 50S ribosomal subunits, and thus maintains levels of free tRNAs and 50S ribosomes. The sequence is that of Peptidyl-tRNA hydrolase from Streptococcus pneumoniae (strain Taiwan19F-14).